The following is a 115-amino-acid chain: MSSENLSDTQMEYEDEKQDSQEKNANLVKGEEVKLKAKYPGLGQKPGGSDFLMKRLQKGQKYFDSGDYNMAKAKMKNKQLPVAGPDKNLVTGDHIPTPQDLPQRRSSLVTSKLAG.

Residues 1–10 (MSSENLSDTQ) are compositionally biased toward polar residues. The interval 1–27 (MSSENLSDTQMEYEDEKQDSQEKNANL) is disordered. Ser-65 is subject to Phosphoserine; by GWL. The tract at residues 77–115 (NKQLPVAGPDKNLVTGDHIPTPQDLPQRRSSLVTSKLAG) is disordered. Residues 104–115 (RRSSLVTSKLAG) show a composition bias toward polar residues.

Belongs to the endosulfine family. Post-translationally, phosphorylation at Ser-65 by gwl during mitosis is essential for interaction with ppp2r2d (PR55-delta) and subsequent inactivation of PP2A.

It localises to the cytoplasm. In terms of biological role, protein phosphatase inhibitor that specifically inhibits protein phosphatase 2A (PP2A) during mitosis. When phosphorylated at Ser-67 during mitosis, specifically interacts with ppp2r2d (PR55-delta) and inhibits its activity, leading to inactivation of PP2A, an essential condition to keep cyclin-B1-CDK1 activity high during M phase. This chain is Alpha-endosulfine (ensa), found in Salmo salar (Atlantic salmon).